The primary structure comprises 60 residues: Large ribosomal subunit protein bL32A (60 aa).

Residues 1-19 (MAVPKRRMSRSNTRSRRSQ) show a composition bias toward basic residues. Residues 1–21 (MAVPKRRMSRSNTRSRRSQWK) form a disordered region.

The protein belongs to the bacterial ribosomal protein bL32 family.

The chain is Large ribosomal subunit protein bL32A from Nocardia farcinica (strain IFM 10152).